Here is a 209-residue protein sequence, read N- to C-terminus: Large ribosomal subunit protein uL3 (209 aa).

Residues 128–154 form a disordered region; it reads QQRGPMTHGSKFHRAPGSMGASSDPSR.

The protein belongs to the universal ribosomal protein uL3 family. In terms of assembly, part of the 50S ribosomal subunit. Forms a cluster with proteins L14 and L19.

In terms of biological role, one of the primary rRNA binding proteins, it binds directly near the 3'-end of the 23S rRNA, where it nucleates assembly of the 50S subunit. The sequence is that of Large ribosomal subunit protein uL3 from Clostridium beijerinckii (strain ATCC 51743 / NCIMB 8052) (Clostridium acetobutylicum).